The chain runs to 865 residues: Fanconi-associated nuclease 1 homolog (865 aa).

The UBZ4-type zinc-finger motif lies at 35–62; the sequence is GKICPLCETKFSLASYKSHMNTCNVADD. Residues cysteine 38, cysteine 41, histidine 53, and cysteine 57 each coordinate Zn(2+). Disordered regions lie at residues 90–140 and 162–187; these read DASF…SLDV and RRSSRLLQNSQKDQADNANKEDPVKK. Basic and acidic residues-rich tracts occupy residues 93-112 and 174-187; these read FSDKSENPTKRRKTDEREVP and DQADNANKEDPVKK. Residues glutamate 682, aspartate 810, glutamate 825, and valine 826 each contribute to the Mn(2+) site. The 114-residue stretch at 744–857 folds into the VRR-NUC domain; it reads QELIEENIRK…GIRAEVCHVA (114 aa).

It belongs to the FAN1 family. Mn(2+) serves as cofactor. The cofactor is Mg(2+).

It is found in the nucleus. The enzyme catalyses Hydrolytically removes 5'-nucleotides successively from the 3'-hydroxy termini of 3'-hydroxy-terminated oligonucleotides.. Functionally, nuclease required for the repair of DNA interstrand cross-links (ICL). Acts as a 5'-3' exonuclease that anchors at a cut end of DNA and cleaves DNA successively at every third nucleotide, allowing to excise an ICL from one strand through flanking incisions. This chain is Fanconi-associated nuclease 1 homolog (fan-1), found in Caenorhabditis elegans.